The following is a 196-amino-acid chain: Phosphatidyl-N-methylethanolamine N-methyltransferase (196 aa).

M1 is a topological domain (lumenal). Residues 2-28 (AIFEINNSFLICAVSIALNPLLWNIAA) constitute an intramembrane region (helical). Residues 29–40 (RSEYNHKTLTKL) are Lumenal-facing. The chain crosses the membrane as a helical span at residues 41 to 62 (ANGDSKKACYMLAACIFVAGIV). Residues 63–89 (RDLIYQNALKQQPTLGIFMNPLVQGIA) are Cytoplasmic-facing. A helical membrane pass occupies residues 90–110 (KLIFCFGSVLVLSSMYKLGLV). Residue 94 to 96 (CFG) coordinates S-adenosyl-L-methionine. Residues 111–153 (GTYLGDYFGFLLPERVSGFPFNVNDNPMYNGSTLCFLSTALRY) are Lumenal-facing. The helical transmembrane segment at 154 to 174 (GKVAGLLLTLEVFFVYRIALK) threads the bilayer. At 175–196 (FEEPFTAKIYAARDSKQAKKSE) the chain is on the cytoplasmic side. 176–177 (EE) is an S-adenosyl-L-methionine binding site.

Belongs to the class VI-like SAM-binding methyltransferase superfamily. PEMT/PEM2 methyltransferase family.

The protein resides in the endoplasmic reticulum membrane. It is found in the mitochondrion membrane. The enzyme catalyses a 1,2-diacyl-sn-glycero-3-phospho-N-methylethanolamine + S-adenosyl-L-methionine = a 1,2-diacyl-sn-glycero-3-phospho-N,N-dimethylethanolamine + S-adenosyl-L-homocysteine + H(+). It catalyses the reaction a 1,2-diacyl-sn-glycero-3-phospho-N,N-dimethylethanolamine + S-adenosyl-L-methionine = a 1,2-diacyl-sn-glycero-3-phosphocholine + S-adenosyl-L-homocysteine + H(+). It participates in phospholipid metabolism; phosphatidylcholine biosynthesis. Functionally, catalyzes the second two steps of the methylation pathway of phosphatidylcholine biosynthesis, the SAM-dependent methylation of phosphatidylmonomethylethanolamine (PMME) to phosphatidyldimethylethanolamine (PDME) and of PDME to phosphatidylcholine (PC). The sequence is that of Phosphatidyl-N-methylethanolamine N-methyltransferase from Schizosaccharomyces pombe (strain 972 / ATCC 24843) (Fission yeast).